Reading from the N-terminus, the 607-residue chain is Sulfite reductase [NADPH] flavoprotein alpha-component (607 aa).

Positions 66-204 (VTILYGSQTG…AAGQWHADVL (139 aa)) constitute a Flavodoxin-like domain. Residues 72 to 77 (SQTGNG), 119 to 122 (STHG), and 155 to 164 (LGDSSYEFFC) each bind FMN. Residues 239–456 (QNPYRAEVLV…VEPNKHFRLP (218 aa)) form the FAD-binding FR-type domain. FAD is bound by residues Thr327, Leu361, 395 to 398 (RLYS), 413 to 415 (TVA), and 428 to 431 (GGAS). Residues 527–528 (SR), 533–537 (KIYVQ), and Asp569 each bind NADP(+). Tyr607 is a binding site for FAD.

This sequence belongs to the NADPH-dependent sulphite reductase flavoprotein subunit CysJ family. The protein in the N-terminal section; belongs to the flavodoxin family. In the C-terminal section; belongs to the flavoprotein pyridine nucleotide cytochrome reductase family. As to quaternary structure, alpha(8)-beta(8). The alpha component is a flavoprotein, the beta component is a hemoprotein. It depends on FAD as a cofactor. The cofactor is FMN.

The catalysed reaction is hydrogen sulfide + 3 NADP(+) + 3 H2O = sulfite + 3 NADPH + 4 H(+). It participates in sulfur metabolism; hydrogen sulfide biosynthesis; hydrogen sulfide from sulfite (NADPH route): step 1/1. In terms of biological role, component of the sulfite reductase complex that catalyzes the 6-electron reduction of sulfite to sulfide. This is one of several activities required for the biosynthesis of L-cysteine from sulfate. The flavoprotein component catalyzes the electron flow from NADPH -&gt; FAD -&gt; FMN to the hemoprotein component. The sequence is that of Sulfite reductase [NADPH] flavoprotein alpha-component from Shewanella oneidensis (strain ATCC 700550 / JCM 31522 / CIP 106686 / LMG 19005 / NCIMB 14063 / MR-1).